A 283-amino-acid polypeptide reads, in one-letter code: Phosphate import ATP-binding protein PstB (283 aa).

Residues 1–20 (MAQTLAQTKQISQSHTFDVS) are compositionally biased toward polar residues. The tract at residues 1–32 (MAQTLAQTKQISQSHTFDVSQSHHKTPDDTNS) is disordered. The ABC transporter domain occupies 37–278 (YSTQNLDLWY…PSNKKTEDYI (242 aa)). 69 to 76 (GPSGCGKS) serves as a coordination point for ATP.

It belongs to the ABC transporter superfamily. Phosphate importer (TC 3.A.1.7) family. In terms of assembly, the complex is composed of two ATP-binding proteins (PstB), two transmembrane proteins (PstC and PstA) and a solute-binding protein (PstS).

It is found in the cell membrane. The catalysed reaction is phosphate(out) + ATP + H2O = ADP + 2 phosphate(in) + H(+). Functionally, part of the ABC transporter complex PstSACB involved in phosphate import. Responsible for energy coupling to the transport system. This chain is Phosphate import ATP-binding protein PstB, found in Staphylococcus aureus (strain USA300).